Consider the following 316-residue polypeptide: ATP synthase gamma chain (316 aa).

The protein belongs to the ATPase gamma chain family. As to quaternary structure, F-type ATPases have 2 components, CF(1) - the catalytic core - and CF(0) - the membrane proton channel. CF(1) has five subunits: alpha(3), beta(3), gamma(1), delta(1), epsilon(1). CF(0) has three main subunits: a, b and c.

Its subcellular location is the cellular thylakoid membrane. In terms of biological role, produces ATP from ADP in the presence of a proton gradient across the membrane. The gamma chain is believed to be important in regulating ATPase activity and the flow of protons through the CF(0) complex. This Synechococcus elongatus (strain ATCC 33912 / PCC 7942 / FACHB-805) (Anacystis nidulans R2) protein is ATP synthase gamma chain.